The chain runs to 160 residues: Phosphopantetheine adenylyltransferase (160 aa).

Substrate is bound at residue Ser9. ATP contacts are provided by residues 9–10 and His17; that span reads SF. The substrate site is built by Lys41, Thr73, and Arg87. Residues 88–90, Glu98, and 123–129 each bind ATP; these read GMR and YTFFSSS.

This sequence belongs to the bacterial CoaD family. In terms of assembly, homohexamer. Mg(2+) serves as cofactor.

It is found in the cytoplasm. It carries out the reaction (R)-4'-phosphopantetheine + ATP + H(+) = 3'-dephospho-CoA + diphosphate. It functions in the pathway cofactor biosynthesis; coenzyme A biosynthesis; CoA from (R)-pantothenate: step 4/5. Reversibly transfers an adenylyl group from ATP to 4'-phosphopantetheine, yielding dephospho-CoA (dPCoA) and pyrophosphate. This chain is Phosphopantetheine adenylyltransferase, found in Roseiflexus sp. (strain RS-1).